Reading from the N-terminus, the 664-residue chain is MSARQDEDQRLQAQTQAQAQVQAQAPLSLYRERLKIANACQSCRASKVKCDGGRPVCARCQKRGRACSYSQHDAASPRGRGRQRAKAPTRQPRPIRSRASVELPVTAPTPVTAQASPLIAQDYSLQTPSATQTPSTTGFSGSSDLEHVHEDRDESRAFYAAHGRFAGEVSSTIDKMAGLSPDTTCSLVPFVDAPLFGDVGEPPRNVVLDFASDLPRAYADRLLAIYWHHVHPVEPVLDQQQFCRTYDAFYSGSGTPLHVDRDIWLSTLNIVFALAVQIQESIPMQKRDDEANRYFQRAWALLRPEAILWKPGSLELVQCLLLMNRYLHCTNNQQKTSMAATLAIRIAQNMVCHTSEESPSSDADKDLRHKVWASCVALERPALLTGHGSDFHAWELELHEIGTHIQLAQVQSKNSMATKLGLPRLYQQDEYHAIAVQLDGCLNKWEKSLPDDWRLQNMHMIHDRRARAERYLLHFRLLHSRIYLHRPMLARLYAIKSHAPTAAAASDPSTISDRLLQECARMCLEAAQKLTSLIAEIHDPNEPIGILPWWYRVYYLHIAGIHFLAAMFASDLFTPSVERAWYQVLAALRAHEHLSLYVQQCARTFETLAARILNARCLSVNGNGIMALDDGAPGLFLDDMFQDVNFDLDEFLFSVDDTGRRTNY.

Residues 40-67 constitute a DNA-binding region (zn(2)-C6 fungal-type); the sequence is CQSCRASKVKCDGGRPVCARCQKRGRAC. A disordered region spans residues 68–102; sequence SYSQHDAASPRGRGRQRAKAPTRQPRPIRSRASVE.

The protein resides in the nucleus. Transcription factor that acts in concert with sor4 which is a transcriptional activator of the gene cluster that mediates the biosynthesis of sorbicillinoids, a diverse group of yellow secondary metabolites that restrict growth of competing pathogenic fungi but not of bacteria. Regulates the cluster genes in a light dependent manner. Also plays a direct or indirect role in regulation of paracelsin biosynthesis and cellulase gene expression. The chain is Sorbicillinoid biosynthetic cluster transcription factor sor3 from Hypocrea jecorina (strain QM6a) (Trichoderma reesei).